Reading from the N-terminus, the 295-residue chain is Acetaldehyde dehydrogenase 2 (295 aa).

17-20 (TGNI) is a binding site for NAD(+). The active-site Acyl-thioester intermediate is the Cys-132. Residues 164 to 172 (SVGPASRAN) and Asn-275 each bind NAD(+).

It belongs to the acetaldehyde dehydrogenase family.

It catalyses the reaction acetaldehyde + NAD(+) + CoA = acetyl-CoA + NADH + H(+). This Salinispora arenicola (strain CNS-205) protein is Acetaldehyde dehydrogenase 2.